The sequence spans 111 residues: Nucleoid-associated protein NMCC_1355 (111 aa).

The protein belongs to the YbaB/EbfC family. In terms of assembly, homodimer.

Its subcellular location is the cytoplasm. The protein localises to the nucleoid. Its function is as follows. Binds to DNA and alters its conformation. May be involved in regulation of gene expression, nucleoid organization and DNA protection. This chain is Nucleoid-associated protein NMCC_1355, found in Neisseria meningitidis serogroup C (strain 053442).